Consider the following 325-residue polypeptide: 8-oxo-dGDP phosphatase NUDT18 (325 aa).

The Nudix hydrolase domain occupies 38–163 (NVCYIVGAVI…DILSLIDAGL (126 aa)). Residue leucine 55 participates in Mg(2+) binding. The Nudix box motif lies at 73–94 (GRMEECESILEALQREVREEAG).

Belongs to the Nudix hydrolase family. Mn(2+) is required as a cofactor. It depends on Mg(2+) as a cofactor.

The catalysed reaction is 8-oxo-dGDP + H2O = 8-oxo-dGMP + phosphate + H(+). It carries out the reaction 8-oxo-dADP + H2O = 8-oxo-dAMP + phosphate + H(+). It catalyses the reaction 2-oxo-dADP + H2O = 2-oxo-dAMP + phosphate + H(+). The enzyme catalyses 8-oxo-GDP + H2O = 8-oxo-GMP + phosphate + H(+). Its function is as follows. Mediates the hydrolysis of oxidized nucleoside diphosphate derivatives. Hydrolyzes 8-oxo-7,8-dihydroguanine (8-oxo-Gua)-containing deoxyribo- and ribonucleoside diphosphates to the monophosphates. Hydrolyzes 8-oxo-dGDP and 8-oxo-GDP with the same efficiencies. Also hydrolyzes 8-OH-dADP and 2-OH-dADP. Exhibited no or minimal hydrolysis activity against 8-oxo-dGTP, 8-oxo-GTP, dGTP, GTP, dGDP and GDP. Probably removes oxidized guanine nucleotides from both the DNA and RNA precursor pools. This Danio rerio (Zebrafish) protein is 8-oxo-dGDP phosphatase NUDT18 (nudt18).